We begin with the raw amino-acid sequence, 333 residues long: L-lactate dehydrogenase B chain (333 aa).

NAD(+) contacts are provided by residues 29-57 (GQVG…LEDK) and Arg-99. Positions 106, 138, and 169 each coordinate substrate. Asn-138 contributes to the NAD(+) binding site. Catalysis depends on His-193, which acts as the Proton acceptor. Thr-248 serves as a coordination point for substrate.

It belongs to the LDH/MDH superfamily. LDH family. As to quaternary structure, homotetramer.

The protein resides in the cytoplasm. It carries out the reaction (S)-lactate + NAD(+) = pyruvate + NADH + H(+). It participates in fermentation; pyruvate fermentation to lactate; (S)-lactate from pyruvate: step 1/1. Functionally, interconverts simultaneously and stereospecifically pyruvate and lactate with concomitant interconversion of NADH and NAD(+). The chain is L-lactate dehydrogenase B chain (LDHB) from Sceloporus woodi (Florida scrub lizard).